The following is a 245-amino-acid chain: U11/U12 small nuclear ribonucleoprotein 35 kDa protein (245 aa).

An RRM domain is found at 51 to 129; that stretch reads LTLFVARLNL…HEIFVDYELE (79 aa). A compositionally biased stretch (basic and acidic residues) spans 146 to 162; sequence GKKESGQLRFGGRDRPF. Positions 146–165 are disordered; it reads GKKESGQLRFGGRDRPFRKP. Residue Lys172 forms a Glycyl lysine isopeptide (Lys-Gly) (interchain with G-Cter in SUMO2) linkage. A disordered region spans residues 173-222; it reads NDQFREGKRERRERSRSRERHWDSRMRDHHDRGREKRWQEREPARAWPEG. Composition is skewed to basic and acidic residues over residues 174 to 185 and 192 to 216; these read DQFREGKRERRE and RHWD…REPA.

Component of the U11/U12 snRNPs that are part of the U12-type spliceosome.

The protein localises to the nucleus. In Bos taurus (Bovine), this protein is U11/U12 small nuclear ribonucleoprotein 35 kDa protein (SNRNP35).